The primary structure comprises 204 residues: Recombination protein RecR (204 aa).

The C4-type zinc finger occupies 58–75 (CSVCQNVTDREEDPCSIC). The 99-residue stretch at 83 to 181 (TVICVVESPV…EVTKIARGIP (99 aa)) folds into the Toprim domain.

It belongs to the RecR family.

Functionally, may play a role in DNA repair. It seems to be involved in an RecBC-independent recombinational process of DNA repair. It may act with RecF and RecO. This chain is Recombination protein RecR, found in Chlorobium luteolum (strain DSM 273 / BCRC 81028 / 2530) (Pelodictyon luteolum).